Reading from the N-terminus, the 123-residue chain is uncharacterized protein (123 aa).

The disordered stretch occupies residues 76–97; that stretch reads ENNKRKKKSEGERVRSPRTFRG.

This is an uncharacterized protein from Saccharomyces cerevisiae (strain ATCC 204508 / S288c) (Baker's yeast).